Here is a 235-residue protein sequence, read N- to C-terminus: Ribose-5-phosphate isomerase A (235 aa).

Residues 32 to 35 (TGST), 89 to 92 (DGAD), and 102 to 105 (KGGG) each bind substrate. Glu111 serves as the catalytic Proton acceptor. Lys129 contacts substrate.

This sequence belongs to the ribose 5-phosphate isomerase family. In terms of assembly, homodimer.

The enzyme catalyses aldehydo-D-ribose 5-phosphate = D-ribulose 5-phosphate. It functions in the pathway carbohydrate degradation; pentose phosphate pathway; D-ribose 5-phosphate from D-ribulose 5-phosphate (non-oxidative stage): step 1/1. Its function is as follows. Catalyzes the reversible conversion of ribose-5-phosphate to ribulose 5-phosphate. In Synechocystis sp. (strain ATCC 27184 / PCC 6803 / Kazusa), this protein is Ribose-5-phosphate isomerase A.